Consider the following 521-residue polypeptide: Maturase K (521 aa).

Belongs to the intron maturase 2 family. MatK subfamily.

The protein resides in the plastid. Its subcellular location is the chloroplast. Functionally, usually encoded in the trnK tRNA gene intron. Probably assists in splicing its own and other chloroplast group II introns. The chain is Maturase K from Trillium erectum (Beth root).